Reading from the N-terminus, the 38-residue chain is uncharacterized protein (38 aa).

This is an uncharacterized protein from Acidianus two-tailed virus (ATV).